Here is a 515-residue protein sequence, read N- to C-terminus: Protein disulfide-isomerase (515 aa).

The first 22 residues, 1 to 22 (MAVVRVRAIVALLCLVAALGLA), serve as a signal peptide directing secretion. Thioredoxin domains follow at residues 23–139 (EPLE…KRTG) and 351–480 (FLEG…SGGQ). Catalysis depends on nucleophile residues cysteine 58, cysteine 61, cysteine 402, and cysteine 405. 2 cysteine pairs are disulfide-bonded: cysteine 58–cysteine 61 and cysteine 402–cysteine 405. Residues 477–515 (SGGQDGAAADDDLEDLETDEETDLEEGDDDEQKIQKDEL) are disordered. Acidic residues predominate over residues 484–507 (AADDDLEDLETDEETDLEEGDDDE). The Prevents secretion from ER motif lies at 512–515 (KDEL).

It belongs to the protein disulfide isomerase family. In terms of assembly, heterodimer; heterodimerizes with the protein microsomal triglyceride transfer MTTP. Homodimer. Monomers and homotetramers may also occur. Also constitutes the structural subunit of prolyl 4-hydroxylase. Stabilizes this enzyme and retains it in the ER without contributing to the catalytic activity. Binds UBQLN1.

It localises to the endoplasmic reticulum. Its subcellular location is the endoplasmic reticulum lumen. The protein localises to the cell membrane. It carries out the reaction Catalyzes the rearrangement of -S-S- bonds in proteins.. Its function is as follows. This multifunctional protein catalyzes the formation, breakage and rearrangement of disulfide bonds. At the cell surface, seems to act as a reductase that cleaves disulfide bonds of proteins attached to the cell. May therefore cause structural modifications of exofacial proteins. Inside the cell, seems to form/rearrange disulfide bonds of nascent proteins. At high concentrations, functions as a chaperone that inhibits aggregation of misfolded proteins. At low concentrations, facilitates aggregation (anti-chaperone activity). Also acts a structural subunit of various enzymes such as prolyl 4-hydroxylase. The chain is Protein disulfide-isomerase (P4HB) from Gallus gallus (Chicken).